Reading from the N-terminus, the 474-residue chain is Iroquois-class homeodomain protein irx-5 (474 aa).

Residues 109–171 (DPAYRKNASR…NARRRLKKEN (63 aa)) constitute a DNA-binding region (homeobox; TALE-type). 3 disordered regions span residues 174 to 222 (TWTP…SPDG), 252 to 294 (ERNG…IQQL), and 453 to 474 (SQSQDDLNKGTPYEMKKGMSSI). The span at 182–199 (EDEDDDENIDLEKNEEDD) shows a compositional bias: acidic residues. Over residues 263–273 (PPTPPLCPPDQ) the composition is skewed to pro residues.

This sequence belongs to the TALE/IRO homeobox family. Early in gastrulation, expressed in cells beneath the blastopore lip. Subsequently expressed in the neural plate in overlapping patterns with other irx members, which all share an anterior border of expression. At the time of neural tube closure (stage 19) in regions of the midbrain, hindbrain, neural tube and optic vesicle, where expression continues during tailbud stages. In stage 34, expressed throughout the eye retina. Does not appear to be expressed in the developing heart or pronephros.

The protein localises to the nucleus. In terms of biological role, acts partially redundantly with other irx members in neural patterning. Required for formation of the posterior forebrain, midbrain, hindbrain, and to a lesser extent, spinal cord. Patterns the neuroectoderm in both the anterior/posterior and dorsal/ventral axes. Does not appear to play a role in pronephros kidney development. Involved in craniofacial and gonadal development. Modulates the migration of progenitor cell populations in branchial arches and gonads by repressing CXCL12. The chain is Iroquois-class homeodomain protein irx-5 (irx5) from Xenopus laevis (African clawed frog).